We begin with the raw amino-acid sequence, 193 residues long: Peptidyl-tRNA hydrolase (193 aa).

Residue tyrosine 17 participates in tRNA binding. Catalysis depends on histidine 22, which acts as the Proton acceptor. TRNA is bound by residues tyrosine 68, asparagine 70, and asparagine 116.

The protein belongs to the PTH family. As to quaternary structure, monomer.

Its subcellular location is the cytoplasm. It carries out the reaction an N-acyl-L-alpha-aminoacyl-tRNA + H2O = an N-acyl-L-amino acid + a tRNA + H(+). Hydrolyzes ribosome-free peptidyl-tRNAs (with 1 or more amino acids incorporated), which drop off the ribosome during protein synthesis, or as a result of ribosome stalling. Its function is as follows. Catalyzes the release of premature peptidyl moieties from peptidyl-tRNA molecules trapped in stalled 50S ribosomal subunits, and thus maintains levels of free tRNAs and 50S ribosomes. This is Peptidyl-tRNA hydrolase from Chromobacterium violaceum (strain ATCC 12472 / DSM 30191 / JCM 1249 / CCUG 213 / NBRC 12614 / NCIMB 9131 / NCTC 9757 / MK).